Reading from the N-terminus, the 90-residue chain is Small ribosomal subunit protein bS16 (90 aa).

The protein belongs to the bacterial ribosomal protein bS16 family.

The chain is Small ribosomal subunit protein bS16 from Bacillus velezensis (strain DSM 23117 / BGSC 10A6 / LMG 26770 / FZB42) (Bacillus amyloliquefaciens subsp. plantarum).